The sequence spans 135 residues: MSEYWYPILGGILLGLSTVMLLLLNGRIAGISGIVGRLLQGGNPAQNIPFVVGLVLGPLLFTVIFDRFPSVTVAATWPTIIVAGLLVGLGTRMGAGCTSGHGIVGIARHSPRSIVATAIFLISGMATATFMGVYQ.

The next 4 membrane-spanning stretches (helical) occupy residues 4–24 (YWYP…LLLL), 45–65 (AQNI…TVIF), 71–91 (VTVA…GLGT), and 114–134 (IVAT…MGVY).

Belongs to the TsuA/YedE (TC 9.B.102) family.

It localises to the cell inner membrane. This chain is Probable transporter PD_1892, found in Xylella fastidiosa (strain Temecula1 / ATCC 700964).